The sequence spans 500 residues: NAD(P)H-quinone oxidoreductase chain 4, chloroplastic (500 aa).

14 helical membrane passes run 3–23 (FFPWLTIIVVLPISAGSLIFF), 37–57 (ICICLLELLLITYVFCYHFQL), 87–107 (IGPILLTGFITTLATLAAWPI), 113–130 (LFHFLMLAMYSGQIGSFS), 134–154 (LLLFFIMWELELIPVYLLLSM), 167–187 (FILYTAGGSIFLLMGVLGMGL), 208–228 (ALEIMFYFGFLIAYAVKSPII), 242–262 (HYSTCMLLAGILLKMGAYGLV), 272–292 (AHSIFSPWLMIVGTIQIIYAA), 305–325 (IAYSSVSHMGFTIIGIGSITD), 330–350 (GAVLQIISHGFIGAALFFLAG), 386–406 (LALPGMSGFVAELIVFFGIIT), 416–436 (ILITFVMAIGMILTPIYSLSM), and 462–482 (LFVSISIFLPVIGIGIYPDFV).

This sequence belongs to the complex I subunit 4 family.

It localises to the plastid. Its subcellular location is the chloroplast thylakoid membrane. The catalysed reaction is a plastoquinone + NADH + (n+1) H(+)(in) = a plastoquinol + NAD(+) + n H(+)(out). It carries out the reaction a plastoquinone + NADPH + (n+1) H(+)(in) = a plastoquinol + NADP(+) + n H(+)(out). This chain is NAD(P)H-quinone oxidoreductase chain 4, chloroplastic, found in Platanus occidentalis (Sycamore).